We begin with the raw amino-acid sequence, 152 residues long: Deoxyuridine 5'-triphosphate nucleotidohydrolase (152 aa).

Residues 72–74, N85, and 89–91 contribute to the substrate site; these read RSG and TID.

It belongs to the dUTPase family. The cofactor is Mg(2+).

The enzyme catalyses dUTP + H2O = dUMP + diphosphate + H(+). The protein operates within pyrimidine metabolism; dUMP biosynthesis; dUMP from dCTP (dUTP route): step 2/2. Its function is as follows. This enzyme is involved in nucleotide metabolism: it produces dUMP, the immediate precursor of thymidine nucleotides and it decreases the intracellular concentration of dUTP so that uracil cannot be incorporated into DNA. This Bradyrhizobium sp. (strain ORS 278) protein is Deoxyuridine 5'-triphosphate nucleotidohydrolase.